Reading from the N-terminus, the 503-residue chain is Glycosyltransferase family 92 protein ZK381.2 (503 aa).

Residues 7 to 27 (YKPCLLIILIFNSVILLFILI) traverse the membrane as a helical segment. The 286-residue stretch at 156 to 441 (KPVIICISPQ…FKCYFDSFYK (286 aa)) folds into the GT92 domain.

This sequence belongs to the glycosyltransferase 92 family.

Its subcellular location is the membrane. This is Glycosyltransferase family 92 protein ZK381.2 from Caenorhabditis elegans.